The primary structure comprises 138 residues: Small ribosomal subunit protein uS11c (138 aa).

The disordered stretch occupies residues 1–24 (MAKPIPKVGSRRNGRSSARKSARR). Residues 9-24 (GSRRNGRSSARKSARR) show a composition bias toward basic residues.

It belongs to the universal ribosomal protein uS11 family. In terms of assembly, part of the 30S ribosomal subunit.

Its subcellular location is the plastid. It is found in the chloroplast. This Gossypium hirsutum (Upland cotton) protein is Small ribosomal subunit protein uS11c.